Consider the following 448-residue polypeptide: Tubulin beta-1 chain (448 aa).

Q11, E72, S141, G145, T146, G147, N207, and N229 together coordinate GTP. E72 lines the Mg(2+) pocket. The segment at 424–448 is disordered; that stretch reads QQYQDAGMDDDEAEEAYEEEEPVEE. Acidic residues predominate over residues 430 to 448; sequence GMDDDEAEEAYEEEEPVEE.

It belongs to the tubulin family. Dimer of alpha and beta chains. A typical microtubule is a hollow water-filled tube with an outer diameter of 25 nm and an inner diameter of 15 nM. Alpha-beta heterodimers associate head-to-tail to form protofilaments running lengthwise along the microtubule wall with the beta-tubulin subunit facing the microtubule plus end conferring a structural polarity. Microtubules usually have 13 protofilaments but different protofilament numbers can be found in some organisms and specialized cells. Mg(2+) is required as a cofactor.

The protein resides in the cytoplasm. It localises to the cytoskeleton. Functionally, tubulin is the major constituent of microtubules, a cylinder consisting of laterally associated linear protofilaments composed of alpha- and beta-tubulin heterodimers. Microtubules grow by the addition of GTP-tubulin dimers to the microtubule end, where a stabilizing cap forms. Below the cap, tubulin dimers are in GDP-bound state, owing to GTPase activity of alpha-tubulin. The polypeptide is Tubulin beta-1 chain (TUB1) (Colletotrichum gloeosporioides (Anthracnose fungus)).